Reading from the N-terminus, the 123-residue chain is Large ribosomal subunit protein uL18 (123 aa).

It belongs to the universal ribosomal protein uL18 family. As to quaternary structure, part of the 50S ribosomal subunit; part of the 5S rRNA/L5/L18/L25 subcomplex. Contacts the 5S and 23S rRNAs.

In terms of biological role, this is one of the proteins that bind and probably mediate the attachment of the 5S RNA into the large ribosomal subunit, where it forms part of the central protuberance. The polypeptide is Large ribosomal subunit protein uL18 (Chlamydia felis (strain Fe/C-56) (Chlamydophila felis)).